A 229-amino-acid chain; its full sequence is NAD(P)H-quinone oxidoreductase subunit K, chloroplastic (229 aa).

4 residues coordinate [4Fe-4S] cluster: C43, C44, C108, and C139.

It belongs to the complex I 20 kDa subunit family. As to quaternary structure, NDH is composed of at least 16 different subunits, 5 of which are encoded in the nucleus. The cofactor is [4Fe-4S] cluster.

The protein resides in the plastid. The protein localises to the chloroplast thylakoid membrane. It carries out the reaction a plastoquinone + NADH + (n+1) H(+)(in) = a plastoquinol + NAD(+) + n H(+)(out). The catalysed reaction is a plastoquinone + NADPH + (n+1) H(+)(in) = a plastoquinol + NADP(+) + n H(+)(out). Functionally, NDH shuttles electrons from NAD(P)H:plastoquinone, via FMN and iron-sulfur (Fe-S) centers, to quinones in the photosynthetic chain and possibly in a chloroplast respiratory chain. The immediate electron acceptor for the enzyme in this species is believed to be plastoquinone. Couples the redox reaction to proton translocation, and thus conserves the redox energy in a proton gradient. This chain is NAD(P)H-quinone oxidoreductase subunit K, chloroplastic, found in Aethionema grandiflorum (Persian stone-cress).